A 445-amino-acid chain; its full sequence is Tubby-like F-box protein 8 (445 aa).

The region spanning 56–102 (ESRWASLPPELLRDVIRRLEASESTWPSRKDVVSCAAVCKAWREMCK) is the F-box domain.

This sequence belongs to the TUB family. As to expression, ubiquitous.

This chain is Tubby-like F-box protein 8 (TULP8), found in Oryza sativa subsp. japonica (Rice).